The following is a 243-amino-acid chain: Dirigent protein 16 (243 aa).

The N-terminal stretch at 1-24 (MMIKQSPFLLLTTILFTVAVFVAA) is a signal peptide.

The protein belongs to the plant dirigent protein family. As to quaternary structure, homodimer.

It is found in the secreted. It localises to the extracellular space. The protein resides in the apoplast. Its function is as follows. Dirigent proteins impart stereoselectivity on the phenoxy radical-coupling reaction, yielding optically active lignans from two molecules of coniferyl alcohol in the biosynthesis of lignans, flavonolignans, and alkaloids and thus plays a central role in plant secondary metabolism. This Arabidopsis thaliana (Mouse-ear cress) protein is Dirigent protein 16 (DIR16).